Reading from the N-terminus, the 231-residue chain is RNA pyrophosphohydrolase (231 aa).

The 144-residue stretch at 6 to 149 folds into the Nudix hydrolase domain; sequence GFRPNVGIIL…KRDVYQLALT (144 aa). Residues 38 to 59 carry the Nudix box motif; that stretch reads GGIKYGETPEQAMYRELHEEIG. The disordered stretch occupies residues 168 to 200; the sequence is VHHGRHGSGQRYAQQPGQPPTLAQRRPLQPVTQ.

Belongs to the Nudix hydrolase family. RppH subfamily. A divalent metal cation serves as cofactor.

Accelerates the degradation of transcripts by removing pyrophosphate from the 5'-end of triphosphorylated RNA, leading to a more labile monophosphorylated state that can stimulate subsequent ribonuclease cleavage. This chain is RNA pyrophosphohydrolase, found in Cupriavidus pinatubonensis (strain JMP 134 / LMG 1197) (Cupriavidus necator (strain JMP 134)).